Reading from the N-terminus, the 518-residue chain is Voltage-gated potassium channel regulatory subunit KCNG2 (518 aa).

Over 1-214 the chain is Cytoplasmic; that stretch reads MALLTGNADR…DMVENPHSGI (214 aa). The chain crosses the membrane as a helical span at residues 215–236; it reads PGKIFACISISFVAITAVSLCI. At 237-257 the chain is on the extracellular side; the sequence is STMPDVREEEDRGECSQKCYD. A helical membrane pass occupies residues 258–279; sequence IFVLETVCVAWFSFEFLLRSIQ. Residues 280 to 290 are Cytoplasmic-facing; it reads AENKCAFLKTP. Residues 291–311 traverse the membrane as a helical segment; it reads LNIIDILAILPFYISLIVDMA. The Extracellular segment spans residues 312–331; it reads STKNSSKPGGGAGNKYLERV. Residues 332–352 traverse the membrane as a helical; Voltage-sensor segment; the sequence is GLVLRFLRALRILYVMRLARH. Residues 353 to 367 lie on the Cytoplasmic side of the membrane; the sequence is SLGLQTLGLTVRRCT. Residues 368–389 traverse the membrane as a helical segment; it reads REFGLLLLFLCVAMALFSPLVY. Over 390–404 the chain is Extracellular; the sequence is LAESELGAKQEFTSI. The helical intramembrane region spans 405-416; the sequence is PTSYWWAVISMT. Positions 417 to 422 match the Selectivity filter motif; the sequence is TVGYGD. The stretch at 417–424 is an intramembrane region; it reads TVGYGDMV. The Extracellular portion of the chain corresponds to 425–431; that stretch reads PRSIPGQ. A helical transmembrane segment spans residues 432-460; that stretch reads VVALSSILSGILLMAFPVTSIFHTFSRSY. The Cytoplasmic segment spans residues 461–518; sequence SELKEQQQRAASRQMHQLEESTKLAGGGSSQWITAASPPDAAREDGRPELDQEAKRSC. The tract at residues 473–518 is disordered; it reads RQMHQLEESTKLAGGGSSQWITAASPPDAAREDGRPELDQEAKRSC. The span at 501 to 518 shows a compositional bias: basic and acidic residues; that stretch reads AAREDGRPELDQEAKRSC.

The protein belongs to the potassium channel family. G (TC 1.A.1.2) subfamily. Kv6.2/KCNG2 sub-subfamily. As to quaternary structure, heterodimer with KCNB1.

Its subcellular location is the cell membrane. Regulatory alpha-subunit of the voltage-gated potassium (Kv) channel which, when coassembled with KCNB1, can modulate the kinetics and conductance-voltage relationship. Modulates channel activity by shifting the threshold and the half-maximal activation to more negative values. Potassium channel subunit that does not form functional channels by itself. This chain is Voltage-gated potassium channel regulatory subunit KCNG2, found in Gallus gallus (Chicken).